The primary structure comprises 287 residues: Diaminopimelate epimerase (287 aa).

Substrate-binding residues include Asn-13, Gln-46, and Asn-66. The active-site Proton donor is Cys-75. Substrate contacts are provided by residues 76-77 (GN), Asn-166, Asn-199, and 217-218 (ER). The active-site Proton acceptor is the Cys-226. 227-228 (GT) contacts substrate.

It belongs to the diaminopimelate epimerase family. As to quaternary structure, homodimer.

The protein resides in the cytoplasm. It catalyses the reaction (2S,6S)-2,6-diaminopimelate = meso-2,6-diaminopimelate. It participates in amino-acid biosynthesis; L-lysine biosynthesis via DAP pathway; DL-2,6-diaminopimelate from LL-2,6-diaminopimelate: step 1/1. Catalyzes the stereoinversion of LL-2,6-diaminopimelate (L,L-DAP) to meso-diaminopimelate (meso-DAP), a precursor of L-lysine and an essential component of the bacterial peptidoglycan. The protein is Diaminopimelate epimerase of Paraburkholderia xenovorans (strain LB400).